The sequence spans 446 residues: MTTQIRPFTTQSEALFARAQAVTPGGVNSPVRAFRSVGGTPRFIREAHGAYLTDMDGHRLLDYIGSWGPMILGHDHPAVREAVAAALDRGTSFGAPSEGEVRLAETVTRLTGVDRVRFVNSGTEATMSALRLARGFTGRTFIVKFRGNYHGHADGLLVEAGSGLMTNAAKTLGQAAPSSAGVPEEYARLTLVCEYNDPAALGALMQERGHDVAAVIFEPVVGNAGVLIPTPEFLAALHRVRDAGALLIADEVMTGFRLSLRGATGLLGLTPDLICWGKIIGGGLPVGAYGGRAEVMDFVSPQGPVYQAGTLSGNPLAMAAGLATLEVLESDPSIYARLETYTMQLAEGLRAAAQAAGVPLSVNQIGSMLTAFHQDAPVGSIRTYADAARSDTGAFAVWFQRMLAQGIYWAPSQFESIFVSAAHTDSDLNATLDAAHSAYAQLGGTA.

At Lys-278 the chain carries N6-(pyridoxal phosphate)lysine.

It belongs to the class-III pyridoxal-phosphate-dependent aminotransferase family. HemL subfamily. In terms of assembly, homodimer. Requires pyridoxal 5'-phosphate as cofactor.

The protein resides in the cytoplasm. It carries out the reaction (S)-4-amino-5-oxopentanoate = 5-aminolevulinate. It participates in porphyrin-containing compound metabolism; protoporphyrin-IX biosynthesis; 5-aminolevulinate from L-glutamyl-tRNA(Glu): step 2/2. This is Glutamate-1-semialdehyde 2,1-aminomutase from Deinococcus geothermalis (strain DSM 11300 / CIP 105573 / AG-3a).